We begin with the raw amino-acid sequence, 440 residues long: Thymidine phosphorylase (440 aa).

This sequence belongs to the thymidine/pyrimidine-nucleoside phosphorylase family. Homodimer.

The enzyme catalyses thymidine + phosphate = 2-deoxy-alpha-D-ribose 1-phosphate + thymine. The protein operates within pyrimidine metabolism; dTMP biosynthesis via salvage pathway; dTMP from thymine: step 1/2. The enzymes which catalyze the reversible phosphorolysis of pyrimidine nucleosides are involved in the degradation of these compounds and in their utilization as carbon and energy sources, or in the rescue of pyrimidine bases for nucleotide synthesis. This is Thymidine phosphorylase from Serratia proteamaculans (strain 568).